A 1381-amino-acid polypeptide reads, in one-letter code: Hepatocyte growth factor receptor (1381 aa).

The first 24 residues, 1–24 (MKAPAVLTPGILLLLFTLVQKSNG), serve as a signal peptide directing secretion. At 25 to 932 (ECKEALTKSE…VIVQPDQNFT (908 aa)) the chain is on the extracellular side. Positions 27–515 (KEALTKSEMN…TGKKITKIPL (489 aa)) constitute a Sema domain. The N-linked (GlcNAc...) asparagine glycan is linked to Asn45. 4 disulfides stabilise this stretch: Cys95-Cys101, Cys98-Cys160, Cys133-Cys141, and Cys172-Cys175. Asn106 is a glycosylation site (N-linked (GlcNAc...) asparagine). N-linked (GlcNAc...) asparagine glycosylation occurs at Asn149. An N-linked (GlcNAc...) asparagine glycan is attached at Asn202. 2 disulfide bridges follow: Cys298–Cys363 and Cys385–Cys397. N-linked (GlcNAc...) asparagine glycosylation is present at Asn399. Disulfide bonds link Cys520-Cys538, Cys526-Cys561, Cys529-Cys545, and Cys541-Cys551. IPT/TIG domains are found at residues 563 to 655 (PTIY…FSYV), 657 to 739 (PIIT…FSYR), and 742 to 836 (PIVY…LIYV). The O-linked (Man) threonine glycan is linked to Thr582. Asn607 and Asn635 each carry an N-linked (GlcNAc...) asparagine glycan. O-linked (Man) threonine glycosylation is found at Thr676 and Thr761. N-linked (GlcNAc...) asparagine glycosylation is found at Asn785, Asn879, and Asn930. The helical transmembrane segment at 933–955 (GLIAGVVSISIALLLLLGLFLWL) threads the bilayer. The Cytoplasmic segment spans residues 956-1381 (KKRKQIKDLG…QDNADGELDT (426 aa)). The residue at position 966 (Ser966) is a Phosphoserine. Thr977 is modified (phosphothreonine). Phosphoserine is present on residues Ser990, Ser997, and Ser1000. The residue at position 1003 (Tyr1003) is a Phosphotyrosine. A Protein kinase domain is found at 1078 to 1345 (VHFNEVIGRG…RISAIFSTFI (268 aa)). ATP-binding positions include 1084–1092 (IGRGHFGCV) and Lys1110. The active-site Proton acceptor is Asp1204. The interval 1212-1381 (LDEKFTVKVA…QDNADGELDT (170 aa)) is interaction with RANBP9. The residue at position 1230 (Tyr1230) is a Phosphotyrosine. Residues Tyr1234 and Tyr1235 each carry the phosphotyrosine; by autocatalysis modification. Residue Thr1289 is modified to Phosphothreonine. An interaction with MUC20 region spans residues 1320–1359 (WHPKAEMRPSFSELVSRISAIFSTFIGEHYVHVNATYVNV). 2 positions are modified to phosphotyrosine; by autocatalysis: Tyr1349 and Tyr1356. Tyr1365 carries the post-translational modification Phosphotyrosine.

It belongs to the protein kinase superfamily. Tyr protein kinase family. In terms of assembly, heterodimer made of an alpha chain (50 kDa) and a beta chain (145 kDa) which are disulfide linked. Binds PLXNB1. Interacts when phosphorylated with downstream effectors including STAT3, PIK3R1, SRC, PCLG1, GRB2 and GAB1. Interacts with SPSB1, SPSB2 and SPSB4. Interacts with INPP5D/SHIP1. When phosphorylated at Tyr-1356, interacts with INPPL1/SHIP2. Interacts with RANBP9 and RANBP10, as well as SPSB1, SPSB2, SPSB3 and SPSB4. SPSB1 binding occurs in the presence and in the absence of HGF, however HGF treatment has a positive effect on this interaction. Interacts with MUC20; prevents interaction with GRB2 and suppresses hepatocyte growth factor-induced cell proliferation. Interacts with GRB10. Interacts with PTPN1 and PTPN2. Interacts with HSP90AA1 and HSP90AB1; the interaction suppresses MET kinase activity. Interacts with tensin TNS3. Interacts (when phosphorylated) with tensin TNS4 (via SH2 domain); the interaction increases MET protein stability by inhibiting MET endocytosis and subsequent lysosomal degradation. Post-translationally, autophosphorylated in response to ligand binding on Tyr-1234 and Tyr-1235 in the kinase domain leading to further phosphorylation of Tyr-1349 and Tyr-1356 in the C-terminal multifunctional docking site. Dephosphorylated by PTPRJ at Tyr-1349 and Tyr-1365. Dephosphorylated by PTPN1 and PTPN2. In terms of processing, ubiquitinated. Ubiquitination by CBL regulates the receptor stability and activity through proteasomal degradation. O-mannosylation of IPT/TIG domains by TMEM260 is required for protein maturation. O-mannosylated residues are composed of single mannose glycans that are not elongated or modified.

It is found in the membrane. The enzyme catalyses L-tyrosyl-[protein] + ATP = O-phospho-L-tyrosyl-[protein] + ADP + H(+). Its activity is regulated as follows. In its inactive state, the C-terminal tail interacts with the catalytic domain and inhibits the kinase activity. Upon ligand binding, the C-terminal tail is displaced and becomes phosphorylated, thus increasing the kinase activity. Functionally, receptor tyrosine kinase that transduces signals from the extracellular matrix into the cytoplasm by binding to hepatocyte growth factor/HGF ligand. Regulates many physiological processes including proliferation, scattering, morphogenesis and survival. Ligand binding at the cell surface induces autophosphorylation of MET on its intracellular domain that provides docking sites for downstream signaling molecules. Following activation by ligand, interacts with the PI3-kinase subunit PIK3R1, PLCG1, SRC, GRB2, STAT3 or the adapter GAB1. Recruitment of these downstream effectors by MET leads to the activation of several signaling cascades including the RAS-ERK, PI3 kinase-AKT, or PLCgamma-PKC. The RAS-ERK activation is associated with the morphogenetic effects while PI3K/AKT coordinates prosurvival effects. During embryonic development, MET signaling plays a role in gastrulation, development and migration of muscles and neuronal precursors, angiogenesis and kidney formation. In adults, participates in wound healing as well as organ regeneration and tissue remodeling. Also promotes differentiation and proliferation of hematopoietic cells. The chain is Hepatocyte growth factor receptor (MET) from Saimiri boliviensis boliviensis (Bolivian squirrel monkey).